The sequence spans 495 residues: Catalase (495 aa).

A disordered region spans residues 1 to 25; sequence MSNNKKLTSLFGAPVSDRENSMTAG. Catalysis depends on residues His-55 and Asn-128. Heme is bound at residue Tyr-338.

It belongs to the catalase family. In terms of assembly, homodimer. Heme is required as a cofactor.

It catalyses the reaction 2 H2O2 = O2 + 2 H2O. Decomposes hydrogen peroxide into water and oxygen; serves to protect cells from the toxic effects of hydrogen peroxide. The protein is Catalase (katA) of Staphylococcus saprophyticus subsp. saprophyticus (strain ATCC 15305 / DSM 20229 / NCIMB 8711 / NCTC 7292 / S-41).